A 123-amino-acid chain; its full sequence is ATP synthase epsilon chain (123 aa).

This sequence belongs to the ATPase epsilon chain family. In terms of assembly, F-type ATPases have 2 components, CF(1) - the catalytic core - and CF(0) - the membrane proton channel. CF(1) has five subunits: alpha(3), beta(3), gamma(1), delta(1), epsilon(1). CF(0) has three main subunits: a, b and c.

The protein localises to the cell inner membrane. Its function is as follows. Produces ATP from ADP in the presence of a proton gradient across the membrane. The chain is ATP synthase epsilon chain (atpC) from Helicobacter pylori (strain ATCC 700392 / 26695) (Campylobacter pylori).